Reading from the N-terminus, the 181-residue chain is ATP synthase subunit delta (181 aa).

It belongs to the ATPase delta chain family. F-type ATPases have 2 components, F(1) - the catalytic core - and F(0) - the membrane proton channel. F(1) has five subunits: alpha(3), beta(3), gamma(1), delta(1), epsilon(1). F(0) has three main subunits: a(1), b(2) and c(10-14). The alpha and beta chains form an alternating ring which encloses part of the gamma chain. F(1) is attached to F(0) by a central stalk formed by the gamma and epsilon chains, while a peripheral stalk is formed by the delta and b chains.

The protein localises to the cell inner membrane. In terms of biological role, f(1)F(0) ATP synthase produces ATP from ADP in the presence of a proton or sodium gradient. F-type ATPases consist of two structural domains, F(1) containing the extramembraneous catalytic core and F(0) containing the membrane proton channel, linked together by a central stalk and a peripheral stalk. During catalysis, ATP synthesis in the catalytic domain of F(1) is coupled via a rotary mechanism of the central stalk subunits to proton translocation. Functionally, this protein is part of the stalk that links CF(0) to CF(1). It either transmits conformational changes from CF(0) to CF(1) or is implicated in proton conduction. This Orientia tsutsugamushi (strain Boryong) (Rickettsia tsutsugamushi) protein is ATP synthase subunit delta.